The sequence spans 579 residues: ATP-dependent lipid A-core flippase (579 aa).

A run of 5 helical transmembrane segments spans residues 24–44 (FALS…LPAL), 63–83 (WVPL…FIST), 150–170 (VLGL…IVFA), 251–271 (VIQF…AGQA), and 275–295 (TTTV…FAPL). An ABC transmembrane type-1 domain is found at 25–307 (ALSIVGLILT…LTAVNDQLQR (283 aa)). The ABC transporter domain occupies 339-575 (LAFRDVGLTY…QGRYAQLHAL (237 aa)). 373-380 (GASGSGKT) provides a ligand contact to ATP.

Belongs to the ABC transporter superfamily. Lipid exporter (TC 3.A.1.106) family. Homodimer.

It is found in the cell inner membrane. The catalysed reaction is ATP + H2O + lipid A-core oligosaccharideSide 1 = ADP + phosphate + lipid A-core oligosaccharideSide 2.. Its function is as follows. Involved in lipopolysaccharide (LPS) biosynthesis. Translocates lipid A-core from the inner to the outer leaflet of the inner membrane. Transmembrane domains (TMD) form a pore in the inner membrane and the ATP-binding domain (NBD) is responsible for energy generation. In Thiobacillus denitrificans (strain ATCC 25259 / T1), this protein is ATP-dependent lipid A-core flippase.